The chain runs to 391 residues: Ribonuclease 3-like protein 2 (391 aa).

Residues 7–26 (PEYNFPAITRCSLSNSLPHR) carry the Nuclear export signal motif. The RNase III domain maps to 60 to 203 (MEAVEKILNY…LAGAVYVDVN (144 aa)). Mg(2+)-binding residues include Glu-96, Asp-189, and Glu-192. DRBM domains follow at residues 218-294 (EPIV…KLSE) and 313-387 (HAKT…ALRK). An intrachain disulfide couples Cys-240 to Cys-322. The Bipartite nuclear localization motif lies at 371–387 (KKAESSSAYHMIRALRK).

Homodimer; disulfide-linked. Mg(2+) is required as a cofactor. Requires Mn(2+) as cofactor. In terms of tissue distribution, expressed in seeds, leaves and flower buds.

It localises to the nucleus. Its subcellular location is the cytoplasm. Ribonuclease that cleaves double-stranded RNA (dsRNA). Required for 3'-external transcribed spacer (ETS) cleavage of the pre-rRNA precursors. May promote the production of 21 nucleotide small interfering RNA (siRNA) during post-transcriptional gene silencing (PTGS). The protein is Ribonuclease 3-like protein 2 (RTL2) of Arabidopsis thaliana (Mouse-ear cress).